The following is a 290-amino-acid chain: 4-hydroxy-tetrahydrodipicolinate synthase (290 aa).

A pyruvate-binding site is contributed by Thr-45. Catalysis depends on Tyr-133, which acts as the Proton donor/acceptor. Catalysis depends on Lys-161, which acts as the Schiff-base intermediate with substrate. Residue Ile-203 coordinates pyruvate.

Belongs to the DapA family. As to quaternary structure, homotetramer; dimer of dimers.

It is found in the cytoplasm. It catalyses the reaction L-aspartate 4-semialdehyde + pyruvate = (2S,4S)-4-hydroxy-2,3,4,5-tetrahydrodipicolinate + H2O + H(+). Its pathway is amino-acid biosynthesis; L-lysine biosynthesis via DAP pathway; (S)-tetrahydrodipicolinate from L-aspartate: step 3/4. Functionally, catalyzes the condensation of (S)-aspartate-beta-semialdehyde [(S)-ASA] and pyruvate to 4-hydroxy-tetrahydrodipicolinate (HTPA). This chain is 4-hydroxy-tetrahydrodipicolinate synthase, found in Cellvibrio japonicus (strain Ueda107) (Pseudomonas fluorescens subsp. cellulosa).